A 652-amino-acid polypeptide reads, in one-letter code: Probable potassium transport system protein Kup (652 aa).

Residues 1 to 20 (MSNDTSPGTSSVDSKSSDPS) show a composition bias toward low complexity. The interval 1–26 (MSNDTSPGTSSVDSKSSDPSYGVPGH) is disordered. A run of 12 helical transmembrane segments spans residues 36–56 (LSLG…LYAL), 76–96 (LVSL…VMFI), 125–145 (WLIV…MITP), 161–181 (PSFD…LFCI), 193–213 (FGPI…FNII), 228–248 (AIHF…SVVL), 270–290 (LGWY…QCAL), 314–334 (LIIL…TGAF), 362–382 (IYIP…IAMF), 391–411 (AYGI…GVLV), 419–439 (AWQS…FFLS), and 444–464 (IPEG…MLMT).

It belongs to the HAK/KUP transporter (TC 2.A.72) family.

The protein resides in the cell inner membrane. It catalyses the reaction K(+)(in) + H(+)(in) = K(+)(out) + H(+)(out). Its function is as follows. Transport of potassium into the cell. Likely operates as a K(+):H(+) symporter. The chain is Probable potassium transport system protein Kup from Zymomonas mobilis subsp. mobilis (strain ATCC 31821 / ZM4 / CP4).